The chain runs to 51 residues: Ovomucoid (51 aa).

The 49-residue stretch at 1–49 folds into the Kazal-like domain; it reads VDCSEYPQPACTTERRPVCGSNNKTYSNKCNFCNAVVKSNGTLTVSHFG. 3 cysteine pairs are disulfide-bonded: C3–C33, C11–C30, and C19–C51. N40 is a glycosylation site (N-linked (GlcNAc...) asparagine).

The protein resides in the secreted. This chain is Ovomucoid, found in Polyplectron napoleonis (Palawan peacock-pheasant).